Consider the following 354-residue polypeptide: Cyclin-D1-2 (354 aa).

Disordered regions lie at residues 37-74 (FFQQLQGPAPAVSSSPSTTTATAPAAAGSCDDGGEEEE) and 331-354 (TTATTAVSSEEVVSSSPPSKRRKM). Low complexity-rich tracts occupy residues 44–66 (PAPAVSSSPSTTTATAPAAAGSC) and 331–346 (TTATTAVSSEEVVSSS).

It belongs to the cyclin family. Cyclin D subfamily.

This is Cyclin-D1-2 (CYCD1-2) from Oryza sativa subsp. japonica (Rice).